Consider the following 364-residue polypeptide: tRNA 2-selenouridine synthase (364 aa).

Residues L14–I137 enclose the Rhodanese domain. C97 (S-selanylcysteine intermediate) is an active-site residue.

The protein belongs to the SelU family. As to quaternary structure, monomer.

The enzyme catalyses 5-methylaminomethyl-2-thiouridine(34) in tRNA + selenophosphate + (2E)-geranyl diphosphate + H2O + H(+) = 5-methylaminomethyl-2-selenouridine(34) in tRNA + (2E)-thiogeraniol + phosphate + diphosphate. It carries out the reaction 5-methylaminomethyl-2-thiouridine(34) in tRNA + (2E)-geranyl diphosphate = 5-methylaminomethyl-S-(2E)-geranyl-thiouridine(34) in tRNA + diphosphate. The catalysed reaction is 5-methylaminomethyl-S-(2E)-geranyl-thiouridine(34) in tRNA + selenophosphate + H(+) = 5-methylaminomethyl-2-(Se-phospho)selenouridine(34) in tRNA + (2E)-thiogeraniol. It catalyses the reaction 5-methylaminomethyl-2-(Se-phospho)selenouridine(34) in tRNA + H2O = 5-methylaminomethyl-2-selenouridine(34) in tRNA + phosphate. Involved in the post-transcriptional modification of the uridine at the wobble position (U34) of tRNA(Lys), tRNA(Glu) and tRNA(Gln). Catalyzes the conversion of 2-thiouridine (S2U-RNA) to 2-selenouridine (Se2U-RNA). Acts in a two-step process involving geranylation of 2-thiouridine (S2U) to S-geranyl-2-thiouridine (geS2U) and subsequent selenation of the latter derivative to 2-selenouridine (Se2U) in the tRNA chain. In Escherichia coli O6:K15:H31 (strain 536 / UPEC), this protein is tRNA 2-selenouridine synthase.